We begin with the raw amino-acid sequence, 177 residues long: Large ribosomal subunit protein uL6 (177 aa).

It belongs to the universal ribosomal protein uL6 family. Part of the 50S ribosomal subunit.

Its function is as follows. This protein binds to the 23S rRNA, and is important in its secondary structure. It is located near the subunit interface in the base of the L7/L12 stalk, and near the tRNA binding site of the peptidyltransferase center. This is Large ribosomal subunit protein uL6 from Ralstonia pickettii (strain 12J).